The following is a 248-amino-acid chain: MDRHHHHHHHHHHHMMSGGGQDPAAGDGGAGGATQDSFFLGPAAAAMFSGAGSSSSGAGTSAGGGGGGPSPSSSSPSLSRYESQKRRDWNTFGQYLRNHRPPLSLSRCSGAHVLEFLKYMDQFGKTKVHTPVCPFYGHPNPPAPCPCPLRQAWGSLDALIGRLRAAYEENGGTPEMNPFGARAVRLYLREVRETQARARGISYEKKKRKKPSSAGAGAGPSSEGSPPPPGGSASGGGDTSASPQFIIP.

Basic residues predominate over residues 1 to 15; sequence MDRHHHHHHHHHHHM. 3 disordered regions span residues 1-35, 50-84, and 198-248; these read MDRH…GATQ, GAGS…YESQ, and ARGI…FIIP. The segment covering 17–32 has biased composition (gly residues); the sequence is SGGGQDPAAGDGGAGG. The segment covering 50–59 has biased composition (low complexity); sequence GAGSSSSGAG. Residues 60–69 show a composition bias toward gly residues; sequence TSAGGGGGGP. Residues 70-79 show a composition bias toward low complexity; sequence SPSSSSPSLS. Residues 80-207 enclose the ALOG domain; it reads RYESQKRRDW…ARGISYEKKK (128 aa). A Nuclear localization signal motif is present at residues 205–209; that stretch reads KKKRK. Low complexity-rich tracts occupy residues 212 to 224 and 239 to 248; these read SSAG…SSEG and TSASPQFIIP.

This sequence belongs to the plant homeotic and developmental regulators ALOG protein family.

Its subcellular location is the nucleus. In terms of biological role, probable transcription regulator that acts as a developmental regulator by promoting cell growth in response to light. The chain is Protein G1-like6 from Oryza sativa subsp. indica (Rice).